Consider the following 554-residue polypeptide: MDFDEILHHVGDSGRFQICMIILLNILSLVLSPHDVLENFTAAIPAHHCSINLDNSRSEVSTDMNLTTEDLMKVSIPMGPNQKPEQCRRFRYTQWQFLDSNISTFNSTELETEPCLDGWTYDHSVFTSTIVTEWDLVCDFQSFKYYAQATSLAGHLVSCPLSGIISDRFGRKPLLMYCSLAYGAVGTYCAFAPNFSVYCVLRFLLSAFQSTILINSLILVLEEASVQWHPTIIVLSGLFNSIGQGVLGGLAYVISDWHLLQLAYALPFFIFFVLFCWVPESVRWLIITGKTDQAWKELQRIASINGKKGIAQNLTTEDLRSKLKKDVNSTGKLFRIKDIFINPLIRKIVLSNSSLLFAELFSFVGLLLDVQLLGKNMFLTQIFLGAIDVPSKSLTYFTIRNVSRRPLIAFLLLTTGSCITITIFISEEMYVLRTIIFILGKGCFAAFTCISTTYINELSPVELRSTLNGVFLAVVRLAGVLSALTLATRKYFVYLPMILYGVLPIVATISILFLPETFNLPHTDIIKDMEKRKRLMSKNISKKEGQDFLETTEC.

The Cytoplasmic portion of the chain corresponds to 1 to 15 (MDFDEILHHVGDSGR). A helical membrane pass occupies residues 16 to 36 (FQICMIILLNILSLVLSPHDV). Topologically, residues 37–144 (LENFTAAIPA…DLVCDFQSFK (108 aa)) are extracellular. Asn-39 carries an N-linked (GlcNAc...) asparagine glycan. Residues 145 to 165 (YYAQATSLAGHLVSCPLSGII) form a helical membrane-spanning segment. At 166–172 (SDRFGRK) the chain is on the cytoplasmic side. A helical membrane pass occupies residues 173 to 193 (PLLMYCSLAYGAVGTYCAFAP). The N-linked (GlcNAc...) asparagine glycan is linked to Asn-194. The Extracellular portion of the chain corresponds to 194–199 (NFSVYC). Residues 200–220 (VLRFLLSAFQSTILINSLILV) traverse the membrane as a helical segment. Residues 221-231 (LEEASVQWHPT) lie on the Cytoplasmic side of the membrane. Residues 232-252 (IIVLSGLFNSIGQGVLGGLAY) form a helical membrane-spanning segment. Residues 253–258 (VISDWH) lie on the Extracellular side of the membrane. A helical transmembrane segment spans residues 259–279 (LLQLAYALPFFIFFVLFCWVP). The Cytoplasmic segment spans residues 280–347 (ESVRWLIITG…DIFINPLIRK (68 aa)). The helical transmembrane segment at 348–368 (IVLSNSSLLFAELFSFVGLLL) threads the bilayer. Over 369–376 (DVQLLGKN) the chain is Extracellular. A helical transmembrane segment spans residues 377-397 (MFLTQIFLGAIDVPSKSLTYF). The Cytoplasmic portion of the chain corresponds to 398–405 (TIRNVSRR). The chain crosses the membrane as a helical span at residues 406–426 (PLIAFLLLTTGSCITITIFIS). The Extracellular segment spans residues 427–434 (EEMYVLRT). The chain crosses the membrane as a helical span at residues 435 to 455 (IIFILGKGCFAAFTCISTTYI). The Cytoplasmic portion of the chain corresponds to 456–466 (NELSPVELRST). The helical transmembrane segment at 467–487 (LNGVFLAVVRLAGVLSALTLA) threads the bilayer. Residues 488–491 (TRKY) lie on the Extracellular side of the membrane. A helical transmembrane segment spans residues 492–512 (FVYLPMILYGVLPIVATISIL). The Cytoplasmic portion of the chain corresponds to 513–554 (FLPETFNLPHTDIIKDMEKRKRLMSKNISKKEGQDFLETTEC).

It belongs to the major facilitator (TC 2.A.1) superfamily. Organic cation transporter (TC 2.A.1.19) family. Specifically expressed in kidney where it is found in proximal convoluted tubules (at protein level). Colocalizes with the prostaglandin-inactivating enzyme HPGD in kidney (at protein level). Not detected in other tissues tested.

The protein localises to the basolateral cell membrane. Sodium-independent organic anion transporter which exhibits high specificity for a subset of prostaglandins including prostaglandin E2 (PGE2), prostaglandin E1 (PGE1), prostaglandin F2-alpha (PGF2-alpha) and prostaglandin D2 (PGD2). The chain is Solute carrier family 22 member 22 from Mus musculus (Mouse).